A 356-amino-acid chain; its full sequence is 3-dehydroquinate synthase (356 aa).

Residues 71-76 (EGEASK), 105-109 (GVTGD), 129-130 (TS), Lys-142, and Lys-151 each bind NAD(+). Residues Glu-184, His-247, and His-264 each contribute to the Zn(2+) site.

The protein belongs to the sugar phosphate cyclases superfamily. Dehydroquinate synthase family. It depends on Co(2+) as a cofactor. Zn(2+) is required as a cofactor. The cofactor is NAD(+).

It is found in the cytoplasm. It carries out the reaction 7-phospho-2-dehydro-3-deoxy-D-arabino-heptonate = 3-dehydroquinate + phosphate. It functions in the pathway metabolic intermediate biosynthesis; chorismate biosynthesis; chorismate from D-erythrose 4-phosphate and phosphoenolpyruvate: step 2/7. Its function is as follows. Catalyzes the conversion of 3-deoxy-D-arabino-heptulosonate 7-phosphate (DAHP) to dehydroquinate (DHQ). The polypeptide is 3-dehydroquinate synthase (Lactococcus lactis subsp. cremoris (strain MG1363)).